A 385-amino-acid polypeptide reads, in one-letter code: V-type proton ATPase subunit C (385 aa).

This sequence belongs to the V-ATPase C subunit family. V-ATPase is a heteromultimeric enzyme made up of two complexes: the ATP-hydrolytic V1 complex and the proton translocation V0 complex. The V1 complex consists of three catalytic AB heterodimers that form a heterohexamer, three peripheral stalks each consisting of EG heterodimers, one central rotor including subunits D and F, and the regulatory subunits C and H. The proton translocation complex V0 consists of the proton transport subunit a, a ring of proteolipid subunits c9c'', rotary subunit d, subunits e and f, and the accessory subunits VhaAC45 and ATP6AP2.

In terms of biological role, subunit of the V1 complex of vacuolar(H+)-ATPase (V-ATPase), a multisubunit enzyme composed of a peripheral complex (V1) that hydrolyzes ATP and a membrane integral complex (V0) that translocates protons. V-ATPase is responsible for acidifying and maintaining the pH of intracellular compartments and in some cell types, is targeted to the plasma membrane, where it is responsible for acidifying the extracellular environment. Subunit C is necessary for the assembly of the catalytic sector of the enzyme and is likely to have a specific function in its catalytic activity. This Manduca sexta (Tobacco hawkmoth) protein is V-type proton ATPase subunit C.